The primary structure comprises 332 residues: Abscisic acid-inducible protein kinase (332 aa).

ATP contacts are provided by residues 1–8 and Lys-23; that span reads GSGNFGVA. The region spanning 1–250 is the Protein kinase domain; it reads GSGNFGVAKL…IPEIKNHPWF (250 aa). Asp-113 serves as the catalytic Proton acceptor.

Belongs to the protein kinase superfamily. Ser/Thr protein kinase family. In terms of processing, autophosphorylated.

It carries out the reaction L-seryl-[protein] + ATP = O-phospho-L-seryl-[protein] + ADP + H(+). The catalysed reaction is L-threonyl-[protein] + ATP = O-phospho-L-threonyl-[protein] + ADP + H(+). Its function is as follows. Involved in water-stress responses. In Triticum aestivum (Wheat), this protein is Abscisic acid-inducible protein kinase.